The following is a 475-amino-acid chain: Sulfate adenylyltransferase subunit 1 (475 aa).

The region spanning 25-239 (KSLLRFLTCG…EVLETVEIQR (215 aa)) is the tr-type G domain. The segment at 34 to 41 (GSVDDGKS) is G1. 34–41 (GSVDDGKS) is a binding site for GTP. Residues 92–96 (GITID) form a G2 region. Residues 113–116 (DTPG) form a G3 region. Residues 113–117 (DTPGH) and 168–171 (NKMD) contribute to the GTP site. Positions 168–171 (NKMD) are G4. The interval 206–208 (SAL) is G5.

This sequence belongs to the TRAFAC class translation factor GTPase superfamily. Classic translation factor GTPase family. CysN/NodQ subfamily. As to quaternary structure, heterodimer composed of CysD, the smaller subunit, and CysN.

It catalyses the reaction sulfate + ATP + H(+) = adenosine 5'-phosphosulfate + diphosphate. It functions in the pathway sulfur metabolism; hydrogen sulfide biosynthesis; sulfite from sulfate: step 1/3. In terms of biological role, with CysD forms the ATP sulfurylase (ATPS) that catalyzes the adenylation of sulfate producing adenosine 5'-phosphosulfate (APS) and diphosphate, the first enzymatic step in sulfur assimilation pathway. APS synthesis involves the formation of a high-energy phosphoric-sulfuric acid anhydride bond driven by GTP hydrolysis by CysN coupled to ATP hydrolysis by CysD. The polypeptide is Sulfate adenylyltransferase subunit 1 (Shigella flexneri).